We begin with the raw amino-acid sequence, 111 residues long: Prostatic steroid-binding protein C1 (111 aa).

Positions 1-23 are cleaved as a signal peptide; the sequence is MSTIKLSLCLLIMLAVCCYEANA.

The protein belongs to the secretoglobin family. Lipophilin subfamily. Prostatein is composed of three different peptides called C1, C2 and C3. These form covalent C1:C3 (F) and C2:C3 (S) heterodimers whose noncovalent association forms tetrameric (C1:C3/C3:C2) prostatein molecules.

The protein resides in the secreted. Its function is as follows. Part of prostatein which is the major secretory glycoprotein of ventral prostate gland. The polypeptide is Prostatic steroid-binding protein C1 (Psbpc1) (Rattus norvegicus (Rat)).